The primary structure comprises 508 residues: Proline--tRNA ligase 2 (508 aa).

It belongs to the class-II aminoacyl-tRNA synthetase family. ProS type 3 subfamily. In terms of assembly, homodimer.

Its subcellular location is the cytoplasm. The catalysed reaction is tRNA(Pro) + L-proline + ATP = L-prolyl-tRNA(Pro) + AMP + diphosphate. In terms of biological role, catalyzes the attachment of proline to tRNA(Pro) in a two-step reaction: proline is first activated by ATP to form Pro-AMP and then transferred to the acceptor end of tRNA(Pro). The polypeptide is Proline--tRNA ligase 2 (Bacillus anthracis).